Consider the following 433-residue polypeptide: Legumain (433 aa).

The first 17 residues, 1 to 17 (MVWKVAVFLSVALGIGA), serve as a signal peptide directing secretion. Residue asparagine 91 is glycosylated (N-linked (GlcNAc...) asparagine). Histidine 148 is a catalytic residue. The N-linked (GlcNAc...) asparagine glycan is linked to asparagine 167. Cysteine 189 acts as the Nucleophile in catalysis. N-linked (GlcNAc...) asparagine glycans are attached at residues asparagine 263 and asparagine 272. The propeptide occupies 324–433 (DLEESRQLTE…SMDHVCLGHY (110 aa)). 2 disulfides stabilise this stretch: cysteine 378–cysteine 412 and cysteine 390–cysteine 429.

The protein belongs to the peptidase C13 family. Homodimer before autocatalytic removal of the propeptide. Monomer after autocatalytic processing. May interact with integrins. Post-translationally, activated by autocatalytic processing at pH 4. As to expression, ubiquitous. Particularly abundant in kidney, heart and placenta.

Its subcellular location is the lysosome. The enzyme catalyses Hydrolysis of proteins and small molecule substrates at -Asn-|-Xaa- bonds.. Its activity is regulated as follows. Inhibited by CST6. Has a strict specificity for hydrolysis of asparaginyl bonds. Can also cleave aspartyl bonds slowly, especially under acidic conditions. Involved in the processing of proteins for MHC class II antigen presentation in the lysosomal/endosomal system. Also involved in MHC class I antigen presentation in cross-presenting dendritic cells by mediating cleavage and maturation of Perforin-2 (MPEG1), thereby promoting antigen translocation in the cytosol. Required for normal lysosomal protein degradation in renal proximal tubules. Required for normal degradation of internalized EGFR. Plays a role in the regulation of cell proliferation via its role in EGFR degradation. This Homo sapiens (Human) protein is Legumain.